Reading from the N-terminus, the 510-residue chain is NAD(P)H-quinone oxidoreductase subunit 2 B, chloroplastic (510 aa).

A run of 12 helical transmembrane segments spans residues 24-44 (LLLF…GLIL), 59-79 (WFYF…LFRW), 99-119 (IFQF…VEYI), 124-144 (MAIT…MFLC), 149-169 (LITI…LSGY), 183-203 (YLLM…WLYG), 229-249 (ISIA…PAPF), 295-315 (WHLL…LLAI), 323-343 (MLAY…IVGD), 354-374 (YMLF…LFGL), 395-415 (ALSL…AGFF), and 418-438 (LYLF…IGLL).

This sequence belongs to the complex I subunit 2 family. As to quaternary structure, NDH is composed of at least 16 different subunits, 5 of which are encoded in the nucleus.

It is found in the plastid. The protein localises to the chloroplast thylakoid membrane. The enzyme catalyses a plastoquinone + NADH + (n+1) H(+)(in) = a plastoquinol + NAD(+) + n H(+)(out). It carries out the reaction a plastoquinone + NADPH + (n+1) H(+)(in) = a plastoquinol + NADP(+) + n H(+)(out). NDH shuttles electrons from NAD(P)H:plastoquinone, via FMN and iron-sulfur (Fe-S) centers, to quinones in the photosynthetic chain and possibly in a chloroplast respiratory chain. The immediate electron acceptor for the enzyme in this species is believed to be plastoquinone. Couples the redox reaction to proton translocation, and thus conserves the redox energy in a proton gradient. The sequence is that of NAD(P)H-quinone oxidoreductase subunit 2 B, chloroplastic from Agrostis stolonifera (Creeping bentgrass).